We begin with the raw amino-acid sequence, 225 residues long: Uridylate kinase (225 aa).

9-10 contributes to the ATP binding site; sequence GS. Gly44 contacts UMP. The ATP site is built by Gly45 and Arg49. UMP-binding positions include Asp66 and 114–120; that span reads THPGHTT. ATP contacts are provided by Thr140, Asn141, Tyr146, and Asp149.

Belongs to the UMP kinase family. As to quaternary structure, homohexamer.

The protein resides in the cytoplasm. It carries out the reaction UMP + ATP = UDP + ADP. The protein operates within pyrimidine metabolism; CTP biosynthesis via de novo pathway; UDP from UMP (UMPK route): step 1/1. Its activity is regulated as follows. Inhibited by UTP. Functionally, catalyzes the reversible phosphorylation of UMP to UDP. The chain is Uridylate kinase from Thermococcus kodakarensis (strain ATCC BAA-918 / JCM 12380 / KOD1) (Pyrococcus kodakaraensis (strain KOD1)).